The following is a 212-amino-acid chain: Large ribosomal subunit protein uL4 (212 aa).

Polar residues predominate over residues S54 to N65. The disordered stretch occupies residues S54 to P85.

Belongs to the universal ribosomal protein uL4 family. In terms of assembly, part of the 50S ribosomal subunit.

One of the primary rRNA binding proteins, this protein initially binds near the 5'-end of the 23S rRNA. It is important during the early stages of 50S assembly. It makes multiple contacts with different domains of the 23S rRNA in the assembled 50S subunit and ribosome. Its function is as follows. Forms part of the polypeptide exit tunnel. The polypeptide is Large ribosomal subunit protein uL4 (Blochmanniella floridana).